The following is a 258-amino-acid chain: Ubiquinone/menaquinone biosynthesis C-methyltransferase UbiE (258 aa).

S-adenosyl-L-methionine-binding positions include threonine 81, aspartate 102, and 130 to 131 (NA).

It belongs to the class I-like SAM-binding methyltransferase superfamily. MenG/UbiE family.

It catalyses the reaction a 2-demethylmenaquinol + S-adenosyl-L-methionine = a menaquinol + S-adenosyl-L-homocysteine + H(+). It carries out the reaction a 2-methoxy-6-(all-trans-polyprenyl)benzene-1,4-diol + S-adenosyl-L-methionine = a 5-methoxy-2-methyl-3-(all-trans-polyprenyl)benzene-1,4-diol + S-adenosyl-L-homocysteine + H(+). It participates in quinol/quinone metabolism; menaquinone biosynthesis; menaquinol from 1,4-dihydroxy-2-naphthoate: step 2/2. It functions in the pathway cofactor biosynthesis; ubiquinone biosynthesis. Its function is as follows. Methyltransferase required for the conversion of demethylmenaquinol (DMKH2) to menaquinol (MKH2) and the conversion of 2-polyprenyl-6-methoxy-1,4-benzoquinol (DDMQH2) to 2-polyprenyl-3-methyl-6-methoxy-1,4-benzoquinol (DMQH2). This is Ubiquinone/menaquinone biosynthesis C-methyltransferase UbiE from Rhizobium rhizogenes (strain K84 / ATCC BAA-868) (Agrobacterium radiobacter).